The following is a 239-amino-acid chain: Calcium-activated potassium channel subunit beta-3 (239 aa).

The Cytoplasmic segment spans residues 1–51; that stretch reads MQPFSIPVQITLQGGRRRQGRTALPASGISNGDPLKVHPKLPSSAGEDRAT. The tract at residues 15–38 is disordered; that stretch reads GRRRQGRTALPASGISNGDPLKVH. The helical transmembrane segment at 52–72 threads the bilayer; it reads LLGIAMMASSVLMFFLLGTTV. Residues 73–197 are Extracellular-facing; the sequence is LKPFMLSSPR…GVVLRKSGHK (125 aa). Residues asparagine 86, asparagine 123, and asparagine 174 are each glycosylated (N-linked (GlcNAc...) asparagine). The helical transmembrane segment at 198–218 threads the bilayer; sequence VVFHCLFWPLLTLLGGALIVG. Topologically, residues 219-239 are cytoplasmic; the sequence is LVRLTQHLSFQCEKYRAVVRA.

The protein belongs to the KCNMB (TC 8.A.14.1) family. KCNMB3 subfamily. In terms of assembly, interacts with KCNMA1 tetramer. There are probably 4 molecules of KCMNB3 per KCNMA1 tetramer. In terms of processing, N-glycosylated. The extracellular domain contains disulfide bond essential for the gating mechanism.

The protein resides in the membrane. Functionally, regulatory subunit of the calcium activated potassium KCNMA1 (maxiK) channel. Modulates the calcium sensitivity and gating kinetics of KCNMA1, thereby contributing to KCNMA1 channel diversity. Alters the functional properties of the current expressed by the KCNMA1 channel. May partially inactivate the current of KCNBMA. Two or more subunits of KCNMB3 are required to block the KCNMA1 tetramer. This is Calcium-activated potassium channel subunit beta-3 from Rattus norvegicus (Rat).